The following is a 109-amino-acid chain: Large ribosomal subunit protein uL22 (109 aa).

This sequence belongs to the universal ribosomal protein uL22 family. In terms of assembly, part of the 50S ribosomal subunit.

In terms of biological role, this protein binds specifically to 23S rRNA; its binding is stimulated by other ribosomal proteins, e.g. L4, L17, and L20. It is important during the early stages of 50S assembly. It makes multiple contacts with different domains of the 23S rRNA in the assembled 50S subunit and ribosome. The globular domain of the protein is located near the polypeptide exit tunnel on the outside of the subunit, while an extended beta-hairpin is found that lines the wall of the exit tunnel in the center of the 70S ribosome. This is Large ribosomal subunit protein uL22 from Blochmanniella pennsylvanica (strain BPEN).